The primary structure comprises 386 residues: Patatin-10 (386 aa).

An N-terminal signal peptide occupies residues Met1–Ala23. A PNPLA domain is found at Leu32 to Leu229. Positions Gly36–Gly41 match the GXGXXG motif. Residues Gly75–Gly79 carry the GXSXG motif. Catalysis depends on Ser77, which acts as the Nucleophile. An N-linked (GlcNAc...) asparagine glycan is attached at Asn115. Residue Asp215 is the Proton acceptor of the active site. A DGA/G motif is present at residues Asp215–Gly217. Residues Glu321–Ala384 adopt a coiled-coil conformation.

It belongs to the patatin family. As to expression, tuber.

The protein localises to the vacuole. Functionally, probable lipolytic acyl hydrolase (LAH), an activity which is thought to be involved in the response of tubers to pathogens. This is Patatin-10 from Solanum tuberosum (Potato).